The sequence spans 288 residues: ATP synthase gamma chain (288 aa).

The protein belongs to the ATPase gamma chain family. As to quaternary structure, F-type ATPases have 2 components, CF(1) - the catalytic core - and CF(0) - the membrane proton channel. CF(1) has five subunits: alpha(3), beta(3), gamma(1), delta(1), epsilon(1). CF(0) has three main subunits: a, b and c.

Its subcellular location is the cell inner membrane. Functionally, produces ATP from ADP in the presence of a proton gradient across the membrane. The gamma chain is believed to be important in regulating ATPase activity and the flow of protons through the CF(0) complex. The protein is ATP synthase gamma chain of Laribacter hongkongensis (strain HLHK9).